We begin with the raw amino-acid sequence, 471 residues long: F-box only protein 3 (471 aa).

The F-box domain maps to 10–56 (PLTLESLPTDPLLLILSFLDYRDLINCCYVSRRLSQLSSHDPLWRRH). The region spanning 278 to 408 (VATTGDITVS…FHMACPTFRV (131 aa)) is the ApaG domain. Acidic residues predominate over residues 419-451 (EYEEMEEEEEEEEEEDEDDDSADMDESDEDDEE). The segment at 419–455 (EYEEMEEEEEEEEEEDEDDDSADMDESDEDDEEERRR) is disordered.

In terms of assembly, part of a SCF (SKP1-cullin-F-box) protein ligase complex SCF(FBXO3) consisting of FBXO3, SKP1, CUL1 and RBX1. Interacts with PML, interaction is direct and takes place either alone or within the SCF complex. (Microbial infection) Interacts (via ApaG domain) with Rift valley fever virus NSs helical filament; this interaction forms a filamentous E3 which mediates degradation of TFIIH complex through interaction with GT2H1.

It localises to the nucleus. Its pathway is protein modification; protein ubiquitination. In terms of biological role, substrate recognition component of the SCF (SKP1-CUL1-F-box protein)-type E3 ubiquitin ligase complex, SCF(FBXO3), which mediates the ubiquitination and subsequent proteasomal degradation of target proteins. Mediates the ubiquitination of HIPK2 and probably that of EP300, leading to rapid degradation by the proteasome. In the presence of PML, HIPK2 ubiquitination still occurs, but degradation is prevented. PML, HIPK2 and FBXO3 may act synergically to activate p53/TP53-dependent transactivation. The SCF(FBXO3) also acts as a regulator of inflammation by mediating ubiquitination and degradation of FBXL2 in response to lipopolysaccharide (LPS). The SCF(FBXO3) complex specifically recognizes FBXL2 phosphorylated at 'Thr-404' and promotes its ubiquitination. (Microbial infection) Associates with the Rift valley fever virus NSs to form a remodeled E3 ligase that triggers efficient proteasomal degradation of targeted proteins. The filamentous E3 ligase targets the TFIIH complex leading to robust inhibition of antiviral immunity and enhances viral pathogenesis. In Homo sapiens (Human), this protein is F-box only protein 3.